A 369-amino-acid chain; its full sequence is Anhydro-N-acetylmuramic acid kinase (369 aa).

ATP is bound at residue 12 to 19 (GTSLDGVD).

The protein belongs to the anhydro-N-acetylmuramic acid kinase family.

The enzyme catalyses 1,6-anhydro-N-acetyl-beta-muramate + ATP + H2O = N-acetyl-D-muramate 6-phosphate + ADP + H(+). Its pathway is amino-sugar metabolism; 1,6-anhydro-N-acetylmuramate degradation. It participates in cell wall biogenesis; peptidoglycan recycling. Its function is as follows. Catalyzes the specific phosphorylation of 1,6-anhydro-N-acetylmuramic acid (anhMurNAc) with the simultaneous cleavage of the 1,6-anhydro ring, generating MurNAc-6-P. Is required for the utilization of anhMurNAc either imported from the medium or derived from its own cell wall murein, and thus plays a role in cell wall recycling. This chain is Anhydro-N-acetylmuramic acid kinase, found in Escherichia coli O6:K15:H31 (strain 536 / UPEC).